Reading from the N-terminus, the 128-residue chain is Prefoldin subunit 1 (128 aa).

Coiled coils occupy residues 17–37 (MIEL…KEGD) and 81–115 (LKDS…LLQQ).

The protein belongs to the prefoldin subunit beta family. As to quaternary structure, heterohexamer of two PFD-alpha type and four PFD-beta type subunits forming prefoldin co-chaperone complex. Interacts with LSM8, a specific subunit of the LSM2-8 complex, which is a core component of the spliceosome.

It is found in the cytoplasm. The protein localises to the nucleus. Its function is as follows. Binds specifically to cytosolic chaperonin (c-CPN) and transfers target proteins to it. Binds to nascent polypeptide chain and promotes folding in an environment in which there are many competing pathways for nonnative proteins. Together with other chaperonins, contribute to the regulation of gene expression by modulating the spliceosome function on pre-mRNA splicing post-transcriptionally by acting as a co-chaperone of Hsp90 to control levels of LSM8. Required for microtubules (MTs) organization and dynamicity. Involved in the process leading to microtubules dissociation in response to gibberellic acid (GA) probably due to the DELLA proteins-mediated translocation of the prefoldin co-chaperone complex from the cytoplasm to the nucleus. This is Prefoldin subunit 1 from Arabidopsis thaliana (Mouse-ear cress).